We begin with the raw amino-acid sequence, 326 residues long: Putative UPF0725 protein At1g28500 (326 aa).

The segment covering 301–320 (KDTEQRSKTRQSEEKVESSQ) has biased composition (basic and acidic residues). A disordered region spans residues 301–326 (KDTEQRSKTRQSEEKVESSQKRSRLC).

Belongs to the UPF0725 (EMB2204) family.

The sequence is that of Putative UPF0725 protein At1g28500 from Arabidopsis thaliana (Mouse-ear cress).